A 438-amino-acid chain; its full sequence is MDSKIDSKTFRVVMLPWLAYSHISRFLVFAKRLTNHNFHIYICSSQTNMQYLKNNLTSQYSKSIQLIELNLPSSSELPLQYHTTHGLPPHLTKTLSDDYQKSGPDFETILIKLNPHLVIYDFNQLWAPEVASTLHIPSIQLLSGCVALYALDAHLYTKPLDENLAKFPFPEIYPKNRDIPKGGSKYIERFVDCMRRSCEIILVRSTMELEGKYIDYLSKTLGKKVLPVGPLVQEASLLQDDHIWIMKWLDKKEESSVVFVCFGSEYILSDNEIEDIAYGLELSQVSFVWAIRAKTSALNGFIDRVGDKGLVIDKWVPQANILSHSSTGGFISHCGWSSTMESIRYGVPIIAMPMQFDQPYNARLMETVGAGIEVGRDGEGRLKREEIAAVVRKVVVEDSGESIREKAKELGEIMKKNMEAEVDGIVIENLVKLCEMNN.

UDP-alpha-D-glucuronate contacts are provided by residues Ser-264, Trp-315 to Val-316, His-333 to Glu-341, and Gln-355 to Gln-358.

It belongs to the UDP-glycosyltransferase family. As to quaternary structure, monomer. As to expression, expressed in petals. Not detected in sepals, stems, leaves, tubular corollas and white petals.

The protein resides in the cytoplasm. The catalysed reaction is cyanidin 3-O-beta-D-glucoside + UDP-alpha-D-glucuronate = cyanidin 3-O-(2-O-beta-D-glucuronosyl)-beta-D-glucoside + UDP + H(+). With respect to regulation, inhibited by copper, mercury, UDP, UTP and partially by calcium, cadmium, iron and UMP. Not affected by cobalt, magnesium, manganese, zinc, nickel, tin, uridine, sadium malonate and glucose. In terms of biological role, involved in the production of glucuronosylated anthocyanins that are the origin of the red coloration of flowers. Can use cyanidin 3-O-6''-O-malonylglucoside, cyanidin 3-O-glucoside and delphinidin 3-O-glucosideas substrates, but not pelargonidin 3-O-glucoside, cyanidin 3-O-3'',6''-O-dimalonylglucoside, pelargonidin 3,5-O-diglucoside, pelargonidin 3-O-6''-O-malonylglucoside-5-O-glucoside, quercetin 3-O-glucoside, quercetin 3-O-6''-O-malonylglucoside, daidzin, genistin,7-O-6''-O-malonylglucosides of daidzein and genistein, cyanidin, quercetin, daidzein, genistein p-Nitrophenyl beta-D-glucopyranoside, beta-estradiol, 17alpha-estradiol, 1-naphthol, 2-naphthol, 4-methylumbelliferone, and p-nitrophenol. Highly specific for UDP-glucuronate (UDP-GlcUA). Arg-25 is decisive with respect to UDP-sugar specificity. The protein is Cyanidin-3-O-glucoside 2-O-glucuronosyltransferase (UGAT) of Bellis perennis (English daisy).